The following is a 273-amino-acid chain: tRNA (guanine-N(7)-)-methyltransferase (273 aa).

The segment at 1-32 (MSATAKKSAAQLQREEEEARKKLKRLSKQGGV) is disordered. Residues Gly-88, 111 to 112 (EI), 150 to 151 (NC), and Cys-170 each bind S-adenosyl-L-methionine. The active site involves Asp-173. An S-adenosyl-L-methionine-binding site is contributed by 248 to 250 (TEE).

The protein belongs to the class I-like SAM-binding methyltransferase superfamily. TrmB family. As to quaternary structure, forms a complex with trm82.

Its subcellular location is the nucleus. It carries out the reaction guanosine(46) in tRNA + S-adenosyl-L-methionine = N(7)-methylguanosine(46) in tRNA + S-adenosyl-L-homocysteine. The protein operates within tRNA modification; N(7)-methylguanine-tRNA biosynthesis. Functionally, catalyzes the formation of N(7)-methylguanine at position 46 (m7G46) in tRNA. This Schizosaccharomyces pombe (strain 972 / ATCC 24843) (Fission yeast) protein is tRNA (guanine-N(7)-)-methyltransferase (trm8).